A 335-amino-acid chain; its full sequence is MKFSRSIQAIDSHTAGEATRIVVGGIPNIKGNSMPEKKEYLEENLDYLRTAIMLEPRGHNDMFGSVMTQPCCPDADFGIIFMDGGGYLNMCGHGTIGAMTAAIETGVVPAVEPVTHVVMEAPAGIIRGDVTVVDGKAKEVSFLNVPAFLYKEGVEVDLPGVGTVKFDISFGGSFFAIIHASQLGLKIEPQNAGKLTELAMKLRDIINEKIEIQHPTLAHIKTVDLVEIYDEPTHPEATYKNVVIFGQGQVDRSPCGTGTSAKLATLHAKGELKVGEKFVYESILGTLFKGEIVEETKVADFNAVVPKITGSAYITGFNHFVIDEEDPLKHGFILK.

Residue Cys91 is the Proton acceptor of the active site. Cys255 functions as the Proton donor in the catalytic mechanism.

Belongs to the proline racemase family. Homodimer.

The catalysed reaction is L-proline = D-proline. Its function is as follows. Catalyzes the reversible interconversion of L- and D-proline. Plays an important role in the regulation of intra- and extracellular amino acid pools, allowing the bacterium to profit from host precursors and enzymatic pathways. Strong B-cell mitogen. This is Proline racemase from Clostridioides difficile (strain 630) (Peptoclostridium difficile).